The primary structure comprises 372 residues: Cytochrome b (372 aa).

The next 4 helical transmembrane spans lie at F29–W49, W73–L95, V108–V128, and F174–I194. Heme b is bound by residues H79 and H93. Positions 178 and 192 each coordinate heme b. H197 contacts a ubiquinone. 4 helical membrane passes run F220–F240, L284–G301, M311–G336, and D344–L363.

It belongs to the cytochrome b family. In terms of assembly, the main subunits of complex b-c1 are: cytochrome b, cytochrome c1 and the Rieske protein. Requires heme b as cofactor.

The protein localises to the mitochondrion inner membrane. Functionally, component of the ubiquinol-cytochrome c reductase complex (complex III or cytochrome b-c1 complex) that is part of the mitochondrial respiratory chain. The b-c1 complex mediates electron transfer from ubiquinol to cytochrome c. Contributes to the generation of a proton gradient across the mitochondrial membrane that is then used for ATP synthesis. In Leptorhynchoides thecatus (Thorny-headed worm), this protein is Cytochrome b (mt:Cyt-b).